A 935-amino-acid polypeptide reads, in one-letter code: Isoleucine--tRNA ligase (935 aa).

The 'HIGH' region signature appears at 58–68; that stretch reads PYANGSIHVGH. Position 558 (E558) interacts with L-isoleucyl-5'-AMP. Residues 599 to 603 carry the 'KMSKS' region motif; the sequence is KMSKS. Position 602 (K602) interacts with ATP. Residues C897, C900, C917, and C920 each coordinate Zn(2+).

The protein belongs to the class-I aminoacyl-tRNA synthetase family. IleS type 1 subfamily. As to quaternary structure, monomer. Requires Zn(2+) as cofactor.

The protein localises to the cytoplasm. It carries out the reaction tRNA(Ile) + L-isoleucine + ATP = L-isoleucyl-tRNA(Ile) + AMP + diphosphate. Its function is as follows. Catalyzes the attachment of isoleucine to tRNA(Ile). As IleRS can inadvertently accommodate and process structurally similar amino acids such as valine, to avoid such errors it has two additional distinct tRNA(Ile)-dependent editing activities. One activity is designated as 'pretransfer' editing and involves the hydrolysis of activated Val-AMP. The other activity is designated 'posttransfer' editing and involves deacylation of mischarged Val-tRNA(Ile). The sequence is that of Isoleucine--tRNA ligase from Francisella tularensis subsp. mediasiatica (strain FSC147).